The sequence spans 194 residues: Ion-translocating oxidoreductase complex subunit A (194 aa).

6 consecutive transmembrane segments (helical) span residues 4–24, 39–59, 71–91, 102–122, 135–155, and 172–192; these read LALILVSAILVNNFVLVQFLG, IGLSLATTFVLTLAAICSYIL, FLRTIGFILVIAVVVQFTEML, VLGIFLPLITTNCIVLGVALL, TTQGFGAGLGFSLVLVLFAAL, and AIGMITAGLMSLAFMGFSGLI.

This sequence belongs to the NqrDE/RnfAE family. In terms of assembly, the complex is composed of six subunits: RnfA, RnfB, RnfC, RnfD, RnfE and RnfG.

It localises to the cell inner membrane. Part of a membrane-bound complex that couples electron transfer with translocation of ions across the membrane. The chain is Ion-translocating oxidoreductase complex subunit A from Pseudomonas paraeruginosa (strain DSM 24068 / PA7) (Pseudomonas aeruginosa (strain PA7)).